The following is a 184-amino-acid chain: GMP synthase [glutamine-hydrolyzing] subunit A (184 aa).

The Glutamine amidotransferase type-1 domain occupies 3–184 (HIAVIDNHGQ…VFKNFIARCQ (182 aa)). Residue cysteine 75 is the Nucleophile of the active site. Catalysis depends on residues histidine 163 and glutamate 165.

Heterodimer composed of a glutamine amidotransferase subunit (A) and a GMP-binding subunit (B).

It catalyses the reaction XMP + L-glutamine + ATP + H2O = GMP + L-glutamate + AMP + diphosphate + 2 H(+). It functions in the pathway purine metabolism; GMP biosynthesis; GMP from XMP (L-Gln route): step 1/1. Its function is as follows. Catalyzes the synthesis of GMP from XMP. The polypeptide is GMP synthase [glutamine-hydrolyzing] subunit A (Haloquadratum walsbyi (strain DSM 16790 / HBSQ001)).